We begin with the raw amino-acid sequence, 385 residues long: Glucans biosynthesis protein C (385 aa).

A run of 10 helical transmembrane segments spans residues 17-37 (AWLM…SHTW), 60-80 (MQVF…RYPL), 91-111 (VGIP…IMLQ), 137-157 (ISHL…VWIF), 173-193 (KFSM…YAVI), 212-232 (FIVM…LAFI), 239-259 (LFTT…VAYL), 274-294 (TESV…FSFG), 311-331 (ASLF…AYIT), and 338-358 (WLGF…LYEI).

This sequence belongs to the acyltransferase 3 family. OpgC subfamily.

It is found in the cell membrane. It participates in glycan metabolism; osmoregulated periplasmic glucan (OPG) biosynthesis. Functionally, necessary for the succinyl substitution of periplasmic glucans. Could catalyze the transfer of succinyl residues from the cytoplasmic side of the membrane to the nascent glucan backbones on the periplasmic side of the membrane. The chain is Glucans biosynthesis protein C from Shigella sonnei (strain Ss046).